The sequence spans 143 residues: Ribosomal RNA large subunit methyltransferase H (143 aa).

Residues G95 and 111-116 (FSDLTF) each bind S-adenosyl-L-methionine.

Belongs to the RNA methyltransferase RlmH family. As to quaternary structure, homodimer.

It is found in the cytoplasm. It catalyses the reaction pseudouridine(1915) in 23S rRNA + S-adenosyl-L-methionine = N(3)-methylpseudouridine(1915) in 23S rRNA + S-adenosyl-L-homocysteine + H(+). Specifically methylates the pseudouridine at position 1915 (m3Psi1915) in 23S rRNA. The chain is Ribosomal RNA large subunit methyltransferase H from Metamycoplasma arthritidis (strain 158L3-1) (Mycoplasma arthritidis).